Here is a 99-residue protein sequence, read N- to C-terminus: Integration host factor subunit alpha (99 aa).

It belongs to the bacterial histone-like protein family. As to quaternary structure, heterodimer of an alpha and a beta chain.

Its function is as follows. This protein is one of the two subunits of integration host factor, a specific DNA-binding protein that functions in genetic recombination as well as in transcriptional and translational control. This Thioalkalivibrio sulfidiphilus (strain HL-EbGR7) protein is Integration host factor subunit alpha.